A 323-amino-acid chain; its full sequence is Fructokinase-1 (323 aa).

Belongs to the carbohydrate kinase PfkB family. Expressed in root, endosperm and leaf tissues.

The catalysed reaction is D-fructose + ATP = D-fructose 6-phosphate + ADP + H(+). Its pathway is glycan biosynthesis; starch biosynthesis. Its activity is regulated as follows. Completely inhibited at 50 mM ATP, but not inhibited at high fructose concentration. Its function is as follows. Fructokinase that may play an important role in maintaining the flux of carbon towards starch formation. May also be involved in a sugar-sensing pathway. This is Fructokinase-1 from Oryza sativa subsp. japonica (Rice).